The sequence spans 395 residues: MADKKLDTQLVNAGRSKKYTLGAVNSVIQRASSLVFDSVEAKKHATRNRANGELFYGRRGTLTHFSLQQAMCELEGGAGCVLFPCGAAAVANSILAFIEQGDHVLMTNTAYEPSQDFCSKILSKLGVTTSWFDPLIGADIVKHLQPNTKIVFLESPGSITMEVHDVPAIVAAVRSVVPDAIIMIDNTWAAGVLFKALDFGIDVSIQAATKYLVGHSDAMIGTAVCNARCWEQLRENAYLMGQMVDADTAYITSRGLRTLGVRLRQHHESSLKVAEWLAEHPQVARVNHPALPGSKGHEFWKRDFTGSSGLFSFVLKKKLNNEELANYLDNFSLFSMAYSWGGYESLILANQPEHIAAIRPQGEIDFSGTLIRLHIGLEDVDDLIADLDAGFARIV.

The residue at position 210 (lysine 210) is an N6-(pyridoxal phosphate)lysine.

This sequence belongs to the trans-sulfuration enzymes family. Homotetramer; dimer of dimers. Pyridoxal 5'-phosphate is required as a cofactor.

The protein localises to the cytoplasm. The enzyme catalyses L,L-cystathionine + H2O = L-homocysteine + pyruvate + NH4(+). It carries out the reaction L-cysteine + H2O = hydrogen sulfide + pyruvate + NH4(+) + H(+). It catalyses the reaction an S-substituted L-cysteine + H2O = a thiol + pyruvate + NH4(+). Its pathway is amino-acid biosynthesis; L-methionine biosynthesis via de novo pathway; L-homocysteine from L-cystathionine: step 1/1. With respect to regulation, L-cysteine inhibits cystathionine beta-lyase activity competitively. Inhibited by aminoethoxyvinylglycine (AVG). Functionally, primarily catalyzes the cleavage of cystathionine to homocysteine, pyruvate and ammonia during methionine biosynthesis. Also exhibits cysteine desulfhydrase activity, producing sulfide from cysteine. In addition, under certain growth conditions, exhibits significant alanine racemase coactivity. In Escherichia coli (strain K12), this protein is Cystathionine beta-lyase MetC.